The following is a 343-amino-acid chain: Holliday junction branch migration complex subunit RuvB (343 aa).

A large ATPase domain (RuvB-L) region spans residues 1-185; the sequence is MMNENLDATG…FGISSRLQYY (185 aa). ATP contacts are provided by residues leucine 24, arginine 25, glycine 66, lysine 69, threonine 70, threonine 71, 132–134, arginine 175, tyrosine 185, and arginine 222; that span reads EDY. Residue threonine 70 participates in Mg(2+) binding. Residues 186 to 256 form a small ATPAse domain (RuvB-S) region; the sequence is STELLSGIVE…IAKFGLKALN (71 aa). A head domain (RuvB-H) region spans residues 259-343; sequence AHGLDEMDNK…GSNQGGLFDN (85 aa). Residues arginine 314 and arginine 319 each contribute to the DNA site.

It belongs to the RuvB family. Homohexamer. Forms an RuvA(8)-RuvB(12)-Holliday junction (HJ) complex. HJ DNA is sandwiched between 2 RuvA tetramers; dsDNA enters through RuvA and exits via RuvB. An RuvB hexamer assembles on each DNA strand where it exits the tetramer. Each RuvB hexamer is contacted by two RuvA subunits (via domain III) on 2 adjacent RuvB subunits; this complex drives branch migration. In the full resolvosome a probable DNA-RuvA(4)-RuvB(12)-RuvC(2) complex forms which resolves the HJ.

The protein localises to the cytoplasm. It catalyses the reaction ATP + H2O = ADP + phosphate + H(+). Its function is as follows. The RuvA-RuvB-RuvC complex processes Holliday junction (HJ) DNA during genetic recombination and DNA repair, while the RuvA-RuvB complex plays an important role in the rescue of blocked DNA replication forks via replication fork reversal (RFR). RuvA specifically binds to HJ cruciform DNA, conferring on it an open structure. The RuvB hexamer acts as an ATP-dependent pump, pulling dsDNA into and through the RuvAB complex. RuvB forms 2 homohexamers on either side of HJ DNA bound by 1 or 2 RuvA tetramers; 4 subunits per hexamer contact DNA at a time. Coordinated motions by a converter formed by DNA-disengaged RuvB subunits stimulates ATP hydrolysis and nucleotide exchange. Immobilization of the converter enables RuvB to convert the ATP-contained energy into a lever motion, pulling 2 nucleotides of DNA out of the RuvA tetramer per ATP hydrolyzed, thus driving DNA branch migration. The RuvB motors rotate together with the DNA substrate, which together with the progressing nucleotide cycle form the mechanistic basis for DNA recombination by continuous HJ branch migration. Branch migration allows RuvC to scan DNA until it finds its consensus sequence, where it cleaves and resolves cruciform DNA. This chain is Holliday junction branch migration complex subunit RuvB, found in Christiangramia forsetii (strain DSM 17595 / CGMCC 1.15422 / KT0803) (Gramella forsetii).